Consider the following 336-residue polypeptide: L-rhamnono-gamma-lactonase (336 aa).

It belongs to the metallo-dependent hydrolases superfamily. A divalent metal cation is required as a cofactor.

The enzyme catalyses L-rhamnono-1,4-lactone + H2O = L-rhamnonate + H(+). Its activity is regulated as follows. Inhibited by Zn(2+), Fe(2+) and Cu(2+), but not by EDTA. Functionally, hydrolase with high substrate specificity for L-rhamnono-1,4-lactone. Catalyzes the second step in an alternative pathway for rhamnose utilization that does not involve phosphorylated intermediates. In Scheffersomyces stipitis (strain ATCC 58785 / CBS 6054 / NBRC 10063 / NRRL Y-11545) (Yeast), this protein is L-rhamnono-gamma-lactonase (LRA2).